The primary structure comprises 146 residues: Anti-sigma F factor (146 aa).

This sequence belongs to the anti-sigma-factor family.

It carries out the reaction L-seryl-[protein] + ATP = O-phospho-L-seryl-[protein] + ADP + H(+). It catalyses the reaction L-threonyl-[protein] + ATP = O-phospho-L-threonyl-[protein] + ADP + H(+). Its function is as follows. Binds to sigma F and blocks its ability to form an RNA polymerase holoenzyme (E-sigma F). Phosphorylates SpoIIAA on a serine residue. This phosphorylation may enable SpoIIAA to act as an anti-anti-sigma factor that counteracts SpoIIAB and thus releases sigma F from inhibition. This Bacillus cereus (strain G9842) protein is Anti-sigma F factor.